Here is a 312-residue protein sequence, read N- to C-terminus: Dehydrin CAS31 (312 aa).

Disordered stretches follow at residues 1 to 88 and 248 to 287; these read MSQY…HTGG and GTEQNTYGTGTGTGHGTTGYGSTGTGHGTTGYGDEQHHGE. A compositionally biased stretch (polar residues) spans 21–30; sequence PLTSQGQVDQ. Gly residues predominate over residues 35-46; the sequence is ISGGGMTGATGH. Over residues 55–66 the composition is skewed to low complexity; it reads HGVGVDQTTGFG. Composition is skewed to gly residues over residues 67 to 88 and 256 to 278; these read SNTGTGTGYGTHTGSGGTHTGG and TGTGTGHGTTGYGSTGTGHGTTG.

It belongs to the plant dehydrin family. As to quaternary structure, interacts with the leghemoglobin LB120-1 in the cytoplasm; this interaction leads to LB120-1 protection from denaturation under thermal and drought stresses. As to expression, expressed in nodules and roots.

It localises to the cytoplasm. Its function is as follows. Intrinsically disordered protein acting as a chaperone. Ensures leghemoglobins (e.g. LB120-1) protection from denaturation under thermal and drought stresses to delay root nodule nitrogenase inactivation and subsequent nodule senescence, thus supporting symbiotic nitrogen fixation (SNF). This chain is Dehydrin CAS31, found in Medicago truncatula (Barrel medic).